We begin with the raw amino-acid sequence, 499 residues long: Endosomal/lysosomal proton channel TMEM175 (499 aa).

The span at 1 to 10 shows a compositional bias: polar residues; sequence MSRLQVQEQA. Residues 1 to 26 are disordered; it reads MSRLQVQEQAVDSEGDSSLYRRDEEG. The Cytoplasmic portion of the chain corresponds to 1-30; that stretch reads MSRLQVQEQAVDSEGDSSLYRRDEEGTQSS. The chain crosses the membrane as a helical span at residues 31-53; the sequence is HRMLGFSDALLSIIATVMILPVT. The RxxxFSD motif 1 motif lies at 32 to 38; it reads RMLGFSD. At 54-74 the chain is on the lumenal side; sequence HTEISPEQQFDKSIQKLLATR. Residues 55-60 are short helix H1-1; it reads TEISPE. Positions 62-68 are short helix H2-1; that stretch reads QFDKSIQ. A helical membrane pass occupies residues 75-97; it reads IAVYLMTFLIVTVAWAAHTRLFQ. The Cytoplasmic portion of the chain corresponds to 98–103; sequence VVGKID. The helical transmembrane segment at 104 to 125 threads the bilayer; that stretch reads DTLALLNLACMMTITLLPYTFS. Over 126-135 the chain is Lumenal; that stretch reads LMVTFPDVPL. A helical transmembrane segment spans residues 136-157; that stretch reads GIFLFCMCVIAIGSVQAMIVGY. At 158–181 the chain is on the cytoplasmic side; it reads AFHFPHLLNPQIQCSTHRALSRRH. The chain crosses the membrane as a helical span at residues 182-202; that stretch reads ILHLVLRGPALCFVAAVFSLF. Residues 203 to 207 are Lumenal-facing; the sequence is FFPLS. A helical transmembrane segment spans residues 208–227; sequence YLLMVTVIFLPHISKATTWC. Topologically, residues 228-254 are cytoplasmic; sequence KDKFMGHRESPAHNVEPFSIDLHAPLS. Residues 255–279 form a helical membrane-spanning segment; sequence KERVEAFSDGVYAIVATLLILDICE. The RxxxFSD motif 2 signature appears at 257–263; sequence RVEAFSD. Residues 280 to 306 are Lumenal-facing; sequence DNVPDPKDVQQKFSGSLVAALGAYGPQ. The short helix H1-2 stretch occupies residues 285-293; it reads PKDVQQKFS. Positions 295–301 are short helix H2-2; the sequence is SLVAALG. The helical transmembrane segment at 307–329 threads the bilayer; the sequence is FLAYFGSFATVGLLWFAHHSLFL. Topologically, residues 330–335 are cytoplasmic; it reads HVRKAT. Residues 336–357 form a helical membrane-spanning segment; sequence QTMGLFNILSLAFVGGLPLAYQ. Over 358–372 the chain is Lumenal; the sequence is QTSAFARQPRDELER. A helical transmembrane segment spans residues 373-393; it reads VRVSCAIIFFASIFQFAIWTT. The Cytoplasmic segment spans residues 394–413; that stretch reads ALLHQRETLQPAVQFGGQEH. Residues 414-437 traverse the membrane as a helical segment; the sequence is AFMFAKLALYPCASLLAFAATCLL. The Lumenal segment spans residues 438-439; that stretch reads SR. A helical membrane pass occupies residues 440 to 466; sequence FSTAIFHLMQIAVPFAFLLLRLLVRLA. Topologically, residues 467–499 are cytoplasmic; it reads LAGLQVLWDLWPERPQQDQGEPETQSQLLPASC.

The protein belongs to the TMEM175 family. In terms of assembly, homodimer. Interacts with AKT (AKT1, AKT2 or AKT3); leading to formation of the lysoK(GF) complex, which activates the channel. Interacts with LAMP1; inhibiting the proton channel activity of TMEM175. Interacts with LAMP2; inhibiting the proton channel activity of TMEM175.

It is found in the endosome membrane. The protein resides in the lysosome membrane. The enzyme catalyses H(+)(in) = H(+)(out). It catalyses the reaction K(+)(in) = K(+)(out). Its activity is regulated as follows. Active at low pH (under pH 4.6): proton channel activity is activated by luminal side protons. Polyunsaturated fatty acids, such as arachidonic acid, also activate the channel activity. Proton channel activity is directly inhibited by LAMP1 or LAMP2, facilitating lysosomal acidification. Channel activity is activated following interaction with AKT (AKT1, AKT2 or AKT3): interaction promotes activation from closed to an open state. Activation by AKT is independent of AKT serine/threonine-protein kinase activity. In terms of biological role, proton-activated proton channel that catalyzes proton efflux from endosomes and lysosomes to maintain a steady-state pH. Activated at low pH (under pH 4.6) by luminal side protons: selectively mediates lysosomal proton release from lysosomes, eliciting a proton leak that balances V-ATPase activity to maintain pH homeostasis. Regulation of lumenal pH stability is required for autophagosome-lysosome fusion. Also acts as a potassium channel at higher pH, regulating potassium conductance in endosomes and lysosomes. Constitutes the pore-forming subunit of the lysoK(GF) complex, a complex activated by extracellular growth factors. The lysoK(GF) complex is composed of TMEM175 and AKT (AKT1, AKT2 or AKT3), a major target of growth factor receptors: in the complex, TMEM175 channel is opened by conformational changes by AKT, leading to its activation. The lysoK(GF) complex is required to protect neurons against stress-induced damage. The polypeptide is Endosomal/lysosomal proton channel TMEM175 (Rattus norvegicus (Rat)).